We begin with the raw amino-acid sequence, 213 residues long: Large ribosomal subunit protein uL3 (213 aa).

The disordered stretch occupies residues 124–151; the sequence is KRHGQSRGPMAHGSRYHRRPGSMGSIAP.

The protein belongs to the universal ribosomal protein uL3 family. Part of the 50S ribosomal subunit. Forms a cluster with proteins L14 and L19.

In terms of biological role, one of the primary rRNA binding proteins, it binds directly near the 3'-end of the 23S rRNA, where it nucleates assembly of the 50S subunit. This chain is Large ribosomal subunit protein uL3, found in Geobacillus kaustophilus (strain HTA426).